Reading from the N-terminus, the 914-residue chain is Serine/threonine kinase SAD-1 (914 aa).

The 252-residue stretch at 47 to 298 (YKLEKTLGKG…LADVFKHPWV (252 aa)) folds into the Protein kinase domain. ATP contacts are provided by residues 53–61 (LGKGQTGLV) and Lys-76. Asp-169 (proton acceptor) is an active-site residue. 3 disordered regions span residues 375–551 (AQED…SPPS), 563–590 (TMNS…SGPW), and 757–914 (NSTQ…ADKV). The segment covering 393–402 (PPKKRTDSSR) has biased composition (basic and acidic residues). Positions 444–462 (RSSTRDLFGSSSSGSYSAR) are enriched in low complexity. Positions 473–482 (ASRSTNSYHY) are enriched in polar residues. The segment covering 495 to 526 (AARHVRDAQERRESRDSGRGSSRKESKDRSDK) has biased composition (basic and acidic residues). 2 stretches are compositionally biased toward low complexity: residues 527-551 (SASS…SPPS) and 563-573 (TMNSTNSSTNS). Residues 574–590 (LIAGNSQTSIGSTSGPW) are compositionally biased toward polar residues. The segment covering 780–796 (DSSVGSACSDSESNASS) has biased composition (low complexity). Polar residues predominate over residues 823–837 (SMRSVGSGTANSYKS). Low complexity predominate over residues 850-876 (ASSSSASNRYGPSSSSSGSYSNNADYS). The segment covering 882–903 (SQRSNGSSAPKNQYSPGSQRSF) has biased composition (polar residues).

This sequence belongs to the protein kinase superfamily. CAMK Ser/Thr protein kinase family. SNF1 subfamily. In terms of assembly, interacts with strd-1 and nab-1. The cofactor is Mg(2+). In terms of tissue distribution, expressed in neurons. Colocalizes with strd-1 along the dorsal nerve cord.

It is found in the synapse. The enzyme catalyses L-seryl-[protein] + ATP = O-phospho-L-seryl-[protein] + ADP + H(+). It carries out the reaction L-threonyl-[protein] + ATP = O-phospho-L-threonyl-[protein] + ADP + H(+). Its function is as follows. Regulates both neuronal polarity and synaptic organization when bound to strd-1. Kinase activity is required for the establishment, but not the maintenance, of both processes. Binding to nab-1 is essential for role in restricting axonal fate during neuronal polarization but is not required for regulating synapse morphology. This chain is Serine/threonine kinase SAD-1, found in Caenorhabditis elegans.